A 551-amino-acid polypeptide reads, in one-letter code: Cation/acetate symporter ActP (551 aa).

Transmembrane regions (helical) follow at residues 5 to 25, 34 to 54, 77 to 97, 104 to 124, 150 to 170, 184 to 204, 207 to 227, 263 to 283, 304 to 324, 356 to 376, 406 to 426, 430 to 450, 469 to 489, and 498 to 518; these read HWSA…ALTG, IQAI…TYWA, GLAI…SALV, GLIY…LIAE, LSAC…MVGA, VAVV…GMLA, WVQI…AIMV, ISAL…PHIL, GFIG…ILLV, FFLG…VAGL, VSKI…ILFE, IAFM…PIII, LGLS…VTIL, and YEYP…FFSI.

It belongs to the sodium:solute symporter (SSF) (TC 2.A.21) family.

Its subcellular location is the cell inner membrane. In terms of biological role, transports acetate. The sequence is that of Cation/acetate symporter ActP from Yersinia pseudotuberculosis serotype IB (strain PB1/+).